Here is a 195-residue protein sequence, read N- to C-terminus: MIEILITIILLAIVLGMDALSLAMGMGLRGVAKDYEKKFVLTVGILHVLMPLLGLNLGLVAGRFLGVWATRLGALVLVYLGWQMLSKGYAEIQPQRYNFAEAKTILAGKQQSTLDSWTSILLLGLSVSIDALTVGFTLGTLKMPILITVLIMGLIAASMSWVGFAGGRVLGRLTGSYAQILGGVVLLALAIKFVV.

6 consecutive transmembrane segments (helical) span residues 4–24 (ILIT…SLAM), 39–59 (FVLT…NLGL), 64–84 (FLGV…GWQM), 120–140 (ILLL…TLGT), 145–165 (ILIT…VGFA), and 175–195 (GSYA…KFVV).

Belongs to the MntP (TC 9.B.29) family.

The protein localises to the cell membrane. Probably functions as a manganese efflux pump. The chain is Putative manganese efflux pump MntP from Syntrophomonas wolfei subsp. wolfei (strain DSM 2245B / Goettingen).